Reading from the N-terminus, the 356-residue chain is Nicotinate-nucleotide--dimethylbenzimidazole phosphoribosyltransferase (356 aa).

Glutamate 317 acts as the Proton acceptor in catalysis.

It belongs to the CobT family. Homodimer.

It carries out the reaction 5,6-dimethylbenzimidazole + nicotinate beta-D-ribonucleotide = alpha-ribazole 5'-phosphate + nicotinate + H(+). It functions in the pathway nucleoside biosynthesis; alpha-ribazole biosynthesis; alpha-ribazole from 5,6-dimethylbenzimidazole: step 1/2. Catalyzes the synthesis of alpha-ribazole-5'-phosphate from nicotinate mononucleotide (NAMN) and 5,6-dimethylbenzimidazole (DMB). The polypeptide is Nicotinate-nucleotide--dimethylbenzimidazole phosphoribosyltransferase (Salmonella schwarzengrund (strain CVM19633)).